We begin with the raw amino-acid sequence, 212 residues long: Pyrrolidone-carboxylate peptidase (212 aa).

Catalysis depends on residues Glu-80, Cys-143, and His-165.

Belongs to the peptidase C15 family. In terms of assembly, homotetramer.

Its subcellular location is the cytoplasm. The catalysed reaction is Release of an N-terminal pyroglutamyl group from a polypeptide, the second amino acid generally not being Pro.. Removes 5-oxoproline from various penultimate amino acid residues except L-proline. The polypeptide is Pyrrolidone-carboxylate peptidase (Vibrio campbellii (strain ATCC BAA-1116)).